We begin with the raw amino-acid sequence, 247 residues long: 3-deoxy-manno-octulosonate cytidylyltransferase (247 aa).

It belongs to the KdsB family.

It is found in the cytoplasm. The enzyme catalyses 3-deoxy-alpha-D-manno-oct-2-ulosonate + CTP = CMP-3-deoxy-beta-D-manno-octulosonate + diphosphate. Its pathway is nucleotide-sugar biosynthesis; CMP-3-deoxy-D-manno-octulosonate biosynthesis; CMP-3-deoxy-D-manno-octulosonate from 3-deoxy-D-manno-octulosonate and CTP: step 1/1. It participates in bacterial outer membrane biogenesis; lipopolysaccharide biosynthesis. Functionally, activates KDO (a required 8-carbon sugar) for incorporation into bacterial lipopolysaccharide in Gram-negative bacteria. The polypeptide is 3-deoxy-manno-octulosonate cytidylyltransferase (Methylobacterium sp. (strain 4-46)).